The following is a 240-amino-acid chain: UDP-2,3-diacylglucosamine hydrolase (240 aa).

5 residues coordinate Mn(2+): aspartate 8, histidine 10, aspartate 41, asparagine 79, and histidine 114. Residue 79–80 (NR) participates in substrate binding. 5 residues coordinate substrate: aspartate 122, serine 160, asparagine 164, lysine 167, and histidine 195. Mn(2+) is bound by residues histidine 195 and histidine 197.

The protein belongs to the LpxH family. Mn(2+) is required as a cofactor.

Its subcellular location is the cell inner membrane. The catalysed reaction is UDP-2-N,3-O-bis[(3R)-3-hydroxytetradecanoyl]-alpha-D-glucosamine + H2O = 2-N,3-O-bis[(3R)-3-hydroxytetradecanoyl]-alpha-D-glucosaminyl 1-phosphate + UMP + 2 H(+). It participates in glycolipid biosynthesis; lipid IV(A) biosynthesis; lipid IV(A) from (3R)-3-hydroxytetradecanoyl-[acyl-carrier-protein] and UDP-N-acetyl-alpha-D-glucosamine: step 4/6. Its function is as follows. Hydrolyzes the pyrophosphate bond of UDP-2,3-diacylglucosamine to yield 2,3-diacylglucosamine 1-phosphate (lipid X) and UMP by catalyzing the attack of water at the alpha-P atom. Involved in the biosynthesis of lipid A, a phosphorylated glycolipid that anchors the lipopolysaccharide to the outer membrane of the cell. The protein is UDP-2,3-diacylglucosamine hydrolase of Escherichia coli O6:K15:H31 (strain 536 / UPEC).